Reading from the N-terminus, the 785-residue chain is Uncoating factor OPG117 (785 aa).

Belongs to the orthopoxvirus OPG117 family. In terms of assembly, homomultimer; hexamer. Interacts with OPG148.

It localises to the host cytoplasm. In terms of biological role, multifunctional protein required for genome uncoating and replication. Major viral uncoating protein that is required for the release of the viral genome from incoming viral cores containing the viral DNA genome. Possesses an ATPase activity that is required for hexamerization and uncoating. This is Uncoating factor OPG117 (OPG117) from Cynomys gunnisoni (Gunnison's prairie dog).